Here is a 222-residue protein sequence, read N- to C-terminus: Latexin (222 aa).

The 97-residue stretch at 1 to 97 folds into the Cystatin LXN-type 1 domain; that stretch reads MEIPPTNYPA…NFTFEGETGK (97 aa). The residue at position 55 (K55) is an N6-acetyllysine. Residues 98–117 are alpha-helical linker; the sequence is NPDEEDNTFYQRLKSMKEPL. In terms of domain architecture, Cystatin LXN-type 2 spans 118 to 222; the sequence is EAQNIPDNFG…SRLPKEVQLE (105 aa).

Belongs to the protease inhibitor I47 (latexin) family. In terms of tissue distribution, highly expressed in heart, prostate, ovary, kidney, pancreas, and colon, moderate or low in other tissues including brain.

It is found in the cytoplasm. In terms of biological role, hardly reversible, non-competitive, and potent inhibitor of CPA1, CPA2 and CPA4. May play a role in inflammation. The protein is Latexin (LXN) of Homo sapiens (Human).